The primary structure comprises 817 residues: MRRRNLIITSDSDSDDGGGGGGAATASTPASASASASFPSVSGGGCGDGWPSPQNPRSVPVQFPSPSSPPPSPPIEISDEEEAEAEVVVEEEEVVVVEDEEEEYEEVEEIEDPDGDSPFVDAPEHISPPPPPPPPARTPMPTPTPTPTPTPTRPPVPVWAAPLPARTPTPTPSAPPRAAAPSPAGTPSPSPIPPSSTPVSALSGPLRQVDEFLRGLGLRLRPEWLESCAAGVPGFYGLGGVEAMARRCFEQFLFADMNACGAGVLPEGVGSMHNAVLDGPLVLQVDEIVNLSAPLRERYRDAHAGPKRCLKLSMTDGIQRIYGMEYRPIKDLEVLAPAGFKIVIRNVHIRRGLFMLVPEVIEILGGVDDELDEARNRLVSEVNKPPRGKRKQGGLPLSSRATLAAWPTNANATNDAEQGASVPRTVNTPHPTRLGNASHASQVGRTTQPMVDNLIPHVVVSNAQEQSRHIQEITMQGQPTSLNRHNKEASASYRYNAQCSISGTTRAMADEHVLVSNAQEQSPHIQEITMQDQSTSLNGRNKEASASTSYRYNAQCSISGTTRAMADERVDPSFVGNNVHEQMQRVQGITMQDHISASSESKRELSVTTPSGYDSRLAPHGVGNTGTRSGEATRSSNVDDGINNIGHPISLCGENEKPFTYIFNMLADWGVQQDTVPYIQGKIKGLITSVKRFQYKQSMQYDLYVYIDDGSFITEAFVDRDIVQNMIGLSAEELAAALSSGGPAQANIRKTMKAFEHFLVNFEGTILIELNRDSSVPIVREMNKGCSSSDAWQLLRRVKTFSGQGYMRSLDFMDTTP.

Disordered stretches follow at residues 1 to 203 (MRRR…SALS) and 595 to 639 (ISAS…SNVD). A compositionally biased stretch (low complexity) spans 24-41 (ATASTPASASASASFPSV). The span at 77–115 (ISDEEEAEAEVVVEEEEVVVVEDEEEEYEEVEEIEDPDG) shows a compositional bias: acidic residues. Pro residues-rich tracts occupy residues 126–157 (ISPP…PPVP), 165–175 (ARTPTPTPSAP), and 184–196 (AGTP…PPSS). A compositionally biased stretch (polar residues) spans 625–638 (TGTRSGEATRSSNV).

The protein belongs to the RMI1 family. Component of the RMI complex, containing at least TOP3A and RMI1.

Its function is as follows. Essential component of the RMI complex, a complex that plays an important role in the resolution step of homologous recombination, in a process called Holliday Junction dissolution, to limit DNA crossover formation in cells. This chain is RecQ-mediated genome instability protein 1 (RMI1), found in Oryza sativa subsp. japonica (Rice).